A 317-amino-acid polypeptide reads, in one-letter code: Olfactory receptor 6Q1 (317 aa).

The Extracellular segment spans residues 1 to 27 (MQPYTKNWTQVTEFVMMGFAGIHEAHL). N-linked (GlcNAc...) asparagine glycosylation is present at Asn-7. Residues 28 to 48 (LFFILFLTMYLFTLVENLAII) form a helical membrane-spanning segment. Residues 49-56 (LVVGLDHR) are Cytoplasmic-facing. A helical transmembrane segment spans residues 57 to 77 (LRRPMYFFLTHLSCLEIWYTS). At 78–103 (VTVPKMLAGFIGVDGGKNISYADCLS) the chain is on the extracellular side. N-linked (GlcNAc...) asparagine glycosylation occurs at Asn-95. Cysteines 101 and 193 form a disulfide. Residues 104–124 (QLFIFTFLGATECFLLAAMAY) traverse the membrane as a helical segment. Over 125 to 143 (DRYVAICMPLHYGAFVSWG) the chain is Cytoplasmic. A helical transmembrane segment spans residues 144 to 164 (TCIRLAAACWLVGFLTPILPI). The Extracellular portion of the chain corresponds to 165-201 (YLLSQLTFYGPNVIDHFSCDASPLLALSCSDVTWKET). Residues 202-221 (VDFLVSLAVLLASSMVIAVS) traverse the membrane as a helical segment. Residues 222–241 (YGNIVWTLLHIRSAAERWKA) lie on the Cytoplasmic side of the membrane. The helical transmembrane segment at 242–262 (FSTCAAHLTVVSLFYGTLFFM) threads the bilayer. Residues 263–275 (YVQTKVTSSINFN) lie on the Extracellular side of the membrane. Residues 276–296 (KVVSVFYSVVTPMLNPLIYSL) traverse the membrane as a helical segment. At 297–317 (RNKEVKGALGRVFSLNFWKGQ) the chain is on the cytoplasmic side.

Belongs to the G-protein coupled receptor 1 family.

It localises to the cell membrane. Functionally, odorant receptor. The protein is Olfactory receptor 6Q1 (OR6Q1) of Homo sapiens (Human).